Consider the following 211-residue polypeptide: Large ribosomal subunit protein uL3 (211 aa).

Belongs to the universal ribosomal protein uL3 family. As to quaternary structure, part of the 50S ribosomal subunit. Forms a cluster with proteins L14 and L19.

One of the primary rRNA binding proteins, it binds directly near the 3'-end of the 23S rRNA, where it nucleates assembly of the 50S subunit. This is Large ribosomal subunit protein uL3 from Geobacter sp. (strain M21).